The primary structure comprises 583 residues: Leucine-rich repeat-containing protein 47 (583 aa).

Position 2 is an N-acetylalanine (Ala-2). LRR repeat units lie at residues 76–95, 100–121, 130–152, 154–175, 180–202, 203–225, and 226–246; these read QLHS…SPEL, ALRV…QGLG, QLQS…ARCA, RLQS…LFRP, LLSE…AHLA, SLKT…ADCP, and KLKE…EKMV. Residues 260 to 300 form a disordered region; that stretch reads VGGRGGGKGKGRAEGSEKEESRRKRRERKQRREGGDGEEQD. The segment covering 270–281 has biased composition (basic and acidic residues); the sequence is GRAEGSEKEESR. 2 positions are modified to phosphoserine: Ser-315 and Ser-431. A coiled-coil region spans residues 402–437; that stretch reads LGRKEAKAKELVRQLQLEAEEQRKQKKRQSVSGLHR. Position 509 is a phosphotyrosine (Tyr-509). The segment at 513-544 is disordered; sequence NKEEGSLSDTEADAVSGQLPDPTTNPSAGKDG. Ser-518 and Ser-520 each carry phosphoserine.

This Homo sapiens (Human) protein is Leucine-rich repeat-containing protein 47 (LRRC47).